The following is a 292-amino-acid chain: HTH-type transcriptional regulator BlaA (292 aa).

One can recognise an HTH lysR-type domain in the interval 5–62 (LPLNALRAFEASARHLNFTKAALELYVTQGAVSQQVRMLEERLGVILFKRLPRGLEMT). The H-T-H motif DNA-binding region spans 22–41 (FTKAALELYVTQGAVSQQVR).

Belongs to the LysR transcriptional regulatory family.

In terms of biological role, positive regulator of the expression of the gene (blaB) for beta-lactamase. This is HTH-type transcriptional regulator BlaA (blaA) from Proteus vulgaris.